The chain runs to 560 residues: Tudor and KH domain-containing protein (560 aa).

2 consecutive KH domains span residues 52-115 and 124-190; these read DIEI…KAAI and PVFE…KHLI. Glycyl lysine isopeptide (Lys-Gly) (interchain with G-Cter in ubiquitin) cross-links involve residues Lys-65, Lys-76, Lys-110, Lys-112, Lys-152, Lys-175, Lys-181, Lys-187, and Lys-193. The disordered stretch occupies residues 211 to 230; sequence RVPRKQPISVRREEVTEPGG. Residues Lys-256 and Lys-267 each participate in a glycyl lysine isopeptide (Lys-Gly) (interchain with G-Cter in ubiquitin) cross-link. The interval 268 to 291 is disordered; that stretch reads EGSWEKPNDDSFQNSGAQSSPETS. Positions 277–290 are enriched in polar residues; the sequence is DSFQNSGAQSSPET. Position 278 is a phosphoserine (Ser-278). Residues 353–412 enclose the Tudor domain; it reads TVHVGDIVAAPLSTNGSWYRARVLGTLENGNLDLYFVDFGDNGDCALKDLRALRSDFLSL. Residues Lys-479, Lys-510, and Lys-529 each participate in a glycyl lysine isopeptide (Lys-Gly) (interchain with G-Cter in ubiquitin) cross-link.

Belongs to the Tdrkh family. As to quaternary structure, interacts with (symmetrically methylated) PIWIL1, PIWIL2 and PIWIL4. Ubiquitinated by PRKN during mitophagy, leading to its degradation and enhancement of mitophagy. Deubiquitinated by USP30. In terms of tissue distribution, highly expressed in testis, present at lower level in brain. Weakly or not expressed in other tissues (at protein level).

It is found in the cytoplasm. The protein resides in the mitochondrion. Functionally, participates in the primary piRNA biogenesis pathway and is required during spermatogenesis to repress transposable elements and prevent their mobilization, which is essential for the germline integrity. The piRNA metabolic process mediates the repression of transposable elements during meiosis by forming complexes composed of piRNAs and Piwi proteins and govern the methylation and subsequent repression of transposons. Required for the final steps of primary piRNA biogenesis by participating in the processing of 31-37 nt intermediates into mature piRNAs. May act in pi-bodies and piP-bodies by transferring piRNA precursors or intermediates to or between these granules. This Mus musculus (Mouse) protein is Tudor and KH domain-containing protein (Tdrkh).